Consider the following 132-residue polypeptide: T-cell receptor alpha chain V region 2B4 (132 aa).

An N-terminal signal peptide occupies residues 1 to 20; it reads MKSLSVSLVVLWLLLNWVNS. Residues 21 to 113 are v segment; it reads QQNVQQSPES…SALYLCAVTL (93 aa). Asn42 is a glycosylation site (N-linked (GlcNAc...) asparagine). The segment at 114–117 is d segment; sequence YGGS. The segment at 118 to 132 is j segment; sequence GNKLIFGTGTLLSVK.

This chain is T-cell receptor alpha chain V region 2B4, found in Mus musculus (Mouse).